A 696-amino-acid polypeptide reads, in one-letter code: DNA ligase (696 aa).

Residues 43-47 (DGEFD), 92-93 (SL), and Glu122 each bind NAD(+). The N6-AMP-lysine intermediate role is filled by Lys124. NAD(+)-binding residues include Arg145, Glu185, Lys301, and Lys325. Residues Cys419, Cys422, Cys438, and Cys444 each coordinate Zn(2+). Residues 608-696 (SIPRNLEGLS…GPDAVAESGV (89 aa)) enclose the BRCT domain.

The protein belongs to the NAD-dependent DNA ligase family. LigA subfamily. The cofactor is Mg(2+). Mn(2+) is required as a cofactor.

It carries out the reaction NAD(+) + (deoxyribonucleotide)n-3'-hydroxyl + 5'-phospho-(deoxyribonucleotide)m = (deoxyribonucleotide)n+m + AMP + beta-nicotinamide D-nucleotide.. DNA ligase that catalyzes the formation of phosphodiester linkages between 5'-phosphoryl and 3'-hydroxyl groups in double-stranded DNA using NAD as a coenzyme and as the energy source for the reaction. It is essential for DNA replication and repair of damaged DNA. The chain is DNA ligase from Rhodococcus jostii (strain RHA1).